Reading from the N-terminus, the 232-residue chain is Chaperone protein CssC (232 aa).

An N-terminal signal peptide occupies residues 1-20 (MKSKLIILLTLVPFSSFSTG).

Belongs to the periplasmic pilus chaperone family.

The protein localises to the periplasm. Functionally, involved in the biogenesis of the CS6 fimbria. In Escherichia coli, this protein is Chaperone protein CssC (cssC).